The chain runs to 298 residues: Possible hemolysin C (298 aa).

2 consecutive CBS domains span residues 80–141 (MVPR…QNGC) and 145–202 (LIRK…IDDE).

The protein belongs to the UPF0053 family. Hemolysin C subfamily.

The sequence is that of Possible hemolysin C (tlyC) from Rickettsia canadensis (strain McKiel).